The chain runs to 129 residues: MAKSVRSSKKKVKRVVTDAVAHIYSSFNNTIVTITDRQGNALSWATSGGSGFRGSRKSTPFAAQVAAERAADMALEYGVKNVDVLVKGPGSGRDSAVRALNAKNLKVTSITDVTPLPHNGCRPPKKRRV.

It belongs to the universal ribosomal protein uS11 family. Part of the 30S ribosomal subunit. Interacts with proteins S7 and S18. Binds to IF-3.

Functionally, located on the platform of the 30S subunit, it bridges several disparate RNA helices of the 16S rRNA. Forms part of the Shine-Dalgarno cleft in the 70S ribosome. The chain is Small ribosomal subunit protein uS11 from Francisella tularensis subsp. tularensis (strain FSC 198).